The chain runs to 502 residues: MWTADEIALLCYEHYGIRLPKKGKPEPNHEWTLLAAVVKIQSPADQDCDTPDKPAQVTKEVVSMGTGTKCIGQSKMRKSGDILNDSHAEVIARRNFQRYLLHQLQLAATLKEDSIFVPGTQKGLWKLRRDLFFVFFSSHTPCGDASIIPMLEFEDQPCCPVIRDWASSSSVEASSNLEAPGNERKCEDLDSPVTKKMRLEPMTAAREVTNGATHHQSFGKQESGPISPGINSCNLTVEGLAAVTRIAPGSAKVIDVYRTGAKCVPGEAGDSRKPGAAFHQVGLLRVKPGRGDRTRSMSCSDKMARWNVLGCQGALLMHFLEEPIYLSAVVIGKCPYSQEAMQRALTGRRQNVSALPKGFGVQELKILQSDLLFEQSRCAVQAKRADSPGRLVPCGAAISWSAVPEQPLDVTANGFPQGTTKKTIGSLQARSQISKVELLRSFQKLLSRIARDKWPDSLRVQKLDTYQDYKEAASSYQEAWSTLRKQAFGSWIRNPPDYHQFK.

Residues 63–501 (SMGTGTKCIG…IRNPPDYHQF (439 aa)) form the A to I editase domain. His87 contributes to the Zn(2+) binding site. Catalysis depends on Glu89, which acts as the Proton donor. 2 residues coordinate 1D-myo-inositol hexakisphosphate: Arg93 and Arg94. Cys142 is a Zn(2+) binding site. Phosphoserine is present on Ser191. Residue Cys299 participates in Zn(2+) binding. 4 residues coordinate 1D-myo-inositol hexakisphosphate: Lys302, Arg305, Lys435, and Lys470.

It belongs to the ADAT1 family. Requires 1D-myo-inositol hexakisphosphate as cofactor.

The catalysed reaction is adenosine(37) in tRNA(Ala) + H2O + H(+) = inosine(37) in tRNA(Ala) + NH4(+). Its function is as follows. Specifically deaminates adenosine-37 to inosine in tRNA-Ala. In Macaca fascicularis (Crab-eating macaque), this protein is tRNA-specific adenosine deaminase 1 (ADAT1).